The chain runs to 305 residues: 4-diphosphocytidyl-2-C-methyl-D-erythritol kinase (305 aa).

Residue lysine 10 is part of the active site. ATP is bound at residue proline 95–serine 105. Residue aspartate 136 is part of the active site. Residues proline 286–serine 305 form a disordered region. Over residues proline 290 to serine 305 the composition is skewed to low complexity.

Belongs to the GHMP kinase family. IspE subfamily.

It catalyses the reaction 4-CDP-2-C-methyl-D-erythritol + ATP = 4-CDP-2-C-methyl-D-erythritol 2-phosphate + ADP + H(+). The protein operates within isoprenoid biosynthesis; isopentenyl diphosphate biosynthesis via DXP pathway; isopentenyl diphosphate from 1-deoxy-D-xylulose 5-phosphate: step 3/6. Its function is as follows. Catalyzes the phosphorylation of the position 2 hydroxy group of 4-diphosphocytidyl-2C-methyl-D-erythritol. This Anaeromyxobacter sp. (strain Fw109-5) protein is 4-diphosphocytidyl-2-C-methyl-D-erythritol kinase.